Here is a 348-residue protein sequence, read N- to C-terminus: Putative S-adenosyl-L-methionine-dependent methyltransferase Mb3432 (348 aa).

Residues Asp171 and Asp200 to Leu201 contribute to the S-adenosyl-L-methionine site.

The protein belongs to the UPF0677 family.

In terms of biological role, exhibits S-adenosyl-L-methionine-dependent methyltransferase activity. The protein is Putative S-adenosyl-L-methionine-dependent methyltransferase Mb3432 of Mycobacterium bovis (strain ATCC BAA-935 / AF2122/97).